The sequence spans 350 residues: Vancomycin C-type resistance protein VanC2 (350 aa).

Residues Glu14 and Ser187 contribute to the active site. The ATP-grasp domain maps to His141–Val343. Ile171–Gly226 contributes to the ATP binding site. The Mg(2+) site is built by Asp297, Glu310, and Asn312. Positions 297, 310, and 312 each coordinate Mn(2+). Residue Ser321 is part of the active site.

It belongs to the D-alanine--D-alanine ligase family. In terms of assembly, homodimer. Mg(2+) is required as a cofactor. The cofactor is Mn(2+).

It localises to the cell membrane. The enzyme catalyses D-serine + D-alanine + ATP = D-alanyl-D-serine + ADP + phosphate + H(+). It participates in cell wall biogenesis; peptidoglycan biosynthesis. Its activity is regulated as follows. Inhibited by D-cycloserine. Its function is as follows. Required for low-level resistance to the glycopeptide antibiotic vancomycin. D-alanine--D-alanine ligase of altered specificity, which catalyzes synthesis of D-Ala-D-Ser; produces a peptidoglycan which does not terminate in D-alanine but in D-serine, thus probably reducing affinity for vancomycin. Only insignificant catalytic synthesis of D-Ala-D-Ala in vitro. In Enterococcus casseliflavus (Enterococcus flavescens), this protein is Vancomycin C-type resistance protein VanC2.